The primary structure comprises 181 residues: Shikimate kinase 2 (181 aa).

12-17 is an ATP binding site; that stretch reads GCGKTT. Mg(2+) contacts are provided by Thr16 and Asp32. Asp34, Arg58, and Gly79 together coordinate substrate. The interval 112–126 is LID domain; it reads EAEPEVGLRPTLTGK. Arg120 provides a ligand contact to ATP. A substrate-binding site is contributed by Arg139.

This sequence belongs to the shikimate kinase family. AroL subfamily. Monomer. The cofactor is Mg(2+).

It localises to the cytoplasm. It catalyses the reaction shikimate + ATP = 3-phosphoshikimate + ADP + H(+). It participates in metabolic intermediate biosynthesis; chorismate biosynthesis; chorismate from D-erythrose 4-phosphate and phosphoenolpyruvate: step 5/7. Functionally, catalyzes the specific phosphorylation of the 3-hydroxyl group of shikimic acid using ATP as a cosubstrate. The sequence is that of Shikimate kinase 2 from Escherichia fergusonii (strain ATCC 35469 / DSM 13698 / CCUG 18766 / IAM 14443 / JCM 21226 / LMG 7866 / NBRC 102419 / NCTC 12128 / CDC 0568-73).